A 112-amino-acid chain; its full sequence is Putative pterin-4-alpha-carbinolamine dehydratase (112 aa).

The protein belongs to the pterin-4-alpha-carbinolamine dehydratase family.

It carries out the reaction (4aS,6R)-4a-hydroxy-L-erythro-5,6,7,8-tetrahydrobiopterin = (6R)-L-erythro-6,7-dihydrobiopterin + H2O. The protein is Putative pterin-4-alpha-carbinolamine dehydratase of Shewanella piezotolerans (strain WP3 / JCM 13877).